We begin with the raw amino-acid sequence, 235 residues long: MPKRGKNYSNKSQSFDKQQVYTLEEAVGHVLATSYAKFDETFDIAIKLGVDPRHADQMIRSSVVLPHGTGKVTRVLVFAKGAKEAEAREAGADFVGGDDLVEKIQGGWLEFDKTVATPDMMGTVGKIGRVLGPRNLMPNAKLGTVTFDVAKVIEEIKSGKVDFKVEKAGILHAGIGKISFGNEKLTANALAFIEKIIQLKPSSSKGVYLKSVTISSTMGPGVKVDPVYLRALVKK.

This sequence belongs to the universal ribosomal protein uL1 family. As to quaternary structure, part of the 50S ribosomal subunit.

Binds directly to 23S rRNA. The L1 stalk is quite mobile in the ribosome, and is involved in E site tRNA release. Its function is as follows. Protein L1 is also a translational repressor protein, it controls the translation of the L11 operon by binding to its mRNA. The chain is Large ribosomal subunit protein uL1 from Desulfotalea psychrophila (strain LSv54 / DSM 12343).